A 727-amino-acid chain; its full sequence is AN1-type zinc finger protein 4 (727 aa).

A Ubiquitin-like domain is found at 28 to 103 (MELFIETLTG…LKLVLAMRGG (76 aa)). Disordered regions lie at residues 187–217 (HRMSGGSMYNSDTDEDEETEPSSSGQQIIEN) and 238–264 (KKPKKAVKIKPHPPVAPRPSSGSTAPS). A compositionally biased stretch (basic residues) spans 238–248 (KKPKKAVKIKP). Residues 661–708 (KKTTNHCFLCGKKTGLASSYECRCGNNFCASHRYAETHGCTYDYKSAG) form an AN1-type zinc finger. 8 residues coordinate Zn(2+): cysteine 667, cysteine 670, cysteine 682, cysteine 684, cysteine 689, histidine 692, histidine 698, and cysteine 700.

This Homo sapiens (Human) protein is AN1-type zinc finger protein 4 (ZFAND4).